The following is a 668-amino-acid chain: Acetoin catabolism regulatory protein (668 aa).

The region spanning 341 to 570 is the Sigma-54 factor interaction domain; that stretch reads LTGGDAALQL…NVLEYARAVC (230 aa). ATP-binding positions include 369–376 and 433–442; these read GETGSGKE and ADGGTLFLDE. The segment covering 586–606 has biased composition (low complexity); sequence GPAPSAALPQPGPAQSPAAAP. The tract at residues 586–611 is disordered; sequence GPAPSAALPQPGPAQSPAAAPFDPHQ. The H-T-H motif DNA-binding region spans 630–649; it reads LSAVARQIGVSRMTLYRRME.

Functionally, required for sigma-54-dependent transcription of acoXABC. In Cupriavidus necator (strain ATCC 17699 / DSM 428 / KCTC 22496 / NCIMB 10442 / H16 / Stanier 337) (Ralstonia eutropha), this protein is Acetoin catabolism regulatory protein (acoR).